Here is a 1230-residue protein sequence, read N- to C-terminus: Serine/threonine-protein kinase PDK1 (1230 aa).

The disordered stretch occupies residues 1–277; sequence MASSHFGPAS…ASSGALKKHS (277 aa). Low complexity predominate over residues 34 to 50; it reads SSSSSSRSTTTCSSTSS. A compositionally biased stretch (polar residues) spans 62-76; it reads ETSTAATSRSQLPSN. The span at 77–87 shows a compositional bias: basic and acidic residues; it reads RHSENEAEHDT. Composition is skewed to polar residues over residues 107-117 and 140-175; these read PRSNRLGTSPQ and SKRQSNTETVSGTSPSTPLGKSFLAQQDLSPNSSTI. Over residues 185-202 the composition is skewed to basic and acidic residues; it reads PNDRLSHDRESHSAERPR. Residues 217 to 226 show a composition bias toward polar residues; the sequence is STPSSPTNSY. Basic and acidic residues predominate over residues 252–262; the sequence is ARDGDDRERRQ. Residues 281 to 801 enclose the Protein kinase domain; it reads WVLGEELGVG…ITFIKTHPFF (521 aa). Residues 291-293 and lysine 319 contribute to the ATP site; that span reads SYS. 2 disordered regions span residues 345 to 522 and 534 to 597; these read LSDP…RSGA and TLPP…KMSA. Composition is skewed to polar residues over residues 378 to 397 and 408 to 433; these read TASIGGQSSMASVSGGTVSN and IVTTSSAASSPVLTASSGSTQLSPTA. Composition is skewed to basic and acidic residues over residues 466 to 494 and 502 to 521; these read GGEDGKDGQDGQETPSREWDRDRDWDNMT and VREESAEGGEKEKDEEERSG. The segment covering 535–544 has biased composition (pro residues); it reads LPPPQIPSTP. The span at 555–569 shows a compositional bias: basic and acidic residues; the sequence is DGHRTSRETPRDRPH. ATP-binding positions include 621 to 623 and glutamate 627; that span reads SLA. Residue aspartate 666 is the Proton acceptor of the active site. Positions 670 and 684 each coordinate ATP. Over residues 850–859 the composition is skewed to acidic residues; sequence EDEDGFEYDA. Disordered regions lie at residues 850–871, 907–955, 972–1035, and 1116–1152; these read EDEDGFEYDADTVSPRPEGGAV, LGED…GGNR, GGGM…SDEA, and EADGDPAGSDSGAGLSSSSHVESGGGGVGGGGRGGGH. Positions 927-942 are enriched in basic and acidic residues; sequence GKREKEVEKKKGEKAR. Composition is skewed to low complexity over residues 977–992, 1002–1030, and 1120–1137; these read GSATSVAASDTVRTPG, RPGSRAGIPSFGLGPGSGSRSNRGSGASM, and DPAGSDSGAGLSSSSHVE. The span at 1138 to 1152 shows a compositional bias: gly residues; the sequence is SGGGGVGGGGRGGGH.

The protein belongs to the protein kinase superfamily. AGC Ser/Thr protein kinase family. PDPK1 subfamily.

The enzyme catalyses L-seryl-[protein] + ATP = O-phospho-L-seryl-[protein] + ADP + H(+). It carries out the reaction L-threonyl-[protein] + ATP = O-phospho-L-threonyl-[protein] + ADP + H(+). In terms of biological role, serine/threonine-protein kinase that functions in the sphingolipid-mediated signaling pathway, regulating organization of the plasma membrane. May phosphorylate PKC1 to activate the cell integrity MAPK cascade during cell wall and membrane stress. May regulate sphingolipid metabolism upstream of YPK1. In Cryptococcus neoformans var. grubii serotype A (strain H99 / ATCC 208821 / CBS 10515 / FGSC 9487) (Filobasidiella neoformans var. grubii), this protein is Serine/threonine-protein kinase PDK1.